The sequence spans 169 residues: Interleukin-36 gamma (169 aa).

Positions 1 to 17 (MRGTPGDADGGGRAVYQ) are excised as a propeptide.

This sequence belongs to the IL-1 family. Interacts with cargo receptor TMED10; the interaction mediates the translocation from the cytoplasm into the ERGIC (endoplasmic reticulum-Golgi intermediate compartment) and thereby secretion. Post-translationally, N-terminal truncation leads to a dramatic enhancement of its activity (&gt;1000-fold). Proteolytically cleaved by cathepsin CTSG. In terms of tissue distribution, highly expressed in tissues containing epithelial cells: skin, lung, stomach and esophagus. Expressed in bronchial epithelial. In skin is expressed only in keratinocytes but not in fibroblasts, endothelial cells or melanocytes. Up-regulated in lesional psoriasis skin. Expressed in monocyte-derived dendritic cells and M1 macrophages.

It is found in the cytoplasm. The protein resides in the secreted. In terms of biological role, cytokine that binds to and signals through the IL1RL2/IL-36R receptor which in turn activates NF-kappa-B and MAPK signaling pathways in target cells. Part of the IL-36 signaling system that is thought to be present in epithelial barriers and to take part in local inflammatory response; similar to the IL-1 system with which it shares the coreceptor IL1RAP. Seems to be involved in skin inflammatory response by acting on keratinocytes, dendritic cells and indirectly on T-cells to drive tissue infiltration, cell maturation and cell proliferation. In cultured keratinocytes induces the expression of macrophage, T-cell, and neutrophil chemokines, such as CCL3, CCL4, CCL5, CCL2, CCL17, CCL22, CL20, CCL5, CCL2, CCL17, CCL22, CXCL8, CCL20 and CXCL1; also stimulates its own expression and that of the prototypic cutaneous pro-inflammatory parameters TNF-alpha, S100A7/psoriasin and inducible NOS. May play a role in pro-inflammatory responses during particular neutrophilic airway inflammation: activates mitogen-activated protein kinases and NF-kappa B in primary lung fibroblasts, and stimulates the expression of IL-8 and CXCL3 and Th17 chemokine CCL20 in lung fibroblasts. May be involved in the innate immune response to fungal pathogens, such as Aspergillus fumigatus. In Homo sapiens (Human), this protein is Interleukin-36 gamma.